We begin with the raw amino-acid sequence, 282 residues long: Pantothenate synthetase (282 aa).

30 to 37 is an ATP binding site; the sequence is MGNLHEGH. The active-site Proton donor is the H37. Q61 lines the (R)-pantoate pocket. Q61 contacts beta-alanine. 148–151 serves as a coordination point for ATP; sequence GQKD. Residue Q154 coordinates (R)-pantoate. Residues V177 and 185–188 each bind ATP; that span reads LSSR.

The protein belongs to the pantothenate synthetase family. In terms of assembly, homodimer.

The protein resides in the cytoplasm. The enzyme catalyses (R)-pantoate + beta-alanine + ATP = (R)-pantothenate + AMP + diphosphate + H(+). It participates in cofactor biosynthesis; (R)-pantothenate biosynthesis; (R)-pantothenate from (R)-pantoate and beta-alanine: step 1/1. In terms of biological role, catalyzes the condensation of pantoate with beta-alanine in an ATP-dependent reaction via a pantoyl-adenylate intermediate. The chain is Pantothenate synthetase from Acinetobacter baumannii (strain AB0057).